A 90-amino-acid chain; its full sequence is Probable Fe(2+)-trafficking protein (90 aa).

It belongs to the Fe(2+)-trafficking protein family.

Could be a mediator in iron transactions between iron acquisition and iron-requiring processes, such as synthesis and/or repair of Fe-S clusters in biosynthetic enzymes. The polypeptide is Probable Fe(2+)-trafficking protein (Aliivibrio salmonicida (strain LFI1238) (Vibrio salmonicida (strain LFI1238))).